The sequence spans 228 residues: Prolactin-2A1 (228 aa).

Residues 1-29 (MQLSITHPCCWTLRLLLVSNLLLWENVAL) form the signal peptide. 2 disulfides stabilise this stretch: Cys87–Cys203 and Cys220–Cys228.

It belongs to the somatotropin/prolactin family. As to expression, expressed specifically in the placenta. Highly expressed in invasive trophoblast cells lining the central placental vessel.

It localises to the secreted. The polypeptide is Prolactin-2A1 (Prl2a1) (Rattus norvegicus (Rat)).